The following is a 352-amino-acid chain: S-adenosylmethionine:tRNA ribosyltransferase-isomerase (352 aa).

Belongs to the QueA family. In terms of assembly, monomer.

Its subcellular location is the cytoplasm. It carries out the reaction 7-aminomethyl-7-carbaguanosine(34) in tRNA + S-adenosyl-L-methionine = epoxyqueuosine(34) in tRNA + adenine + L-methionine + 2 H(+). It participates in tRNA modification; tRNA-queuosine biosynthesis. Functionally, transfers and isomerizes the ribose moiety from AdoMet to the 7-aminomethyl group of 7-deazaguanine (preQ1-tRNA) to give epoxyqueuosine (oQ-tRNA). The protein is S-adenosylmethionine:tRNA ribosyltransferase-isomerase of Gloeobacter violaceus (strain ATCC 29082 / PCC 7421).